Reading from the N-terminus, the 919-residue chain is WD repeat-containing protein 47 (919 aa).

In terms of domain architecture, LisH spans 10–42 (KEVEIIKLILDFLNSKKLHISMLALEKESGVIN). Residues 45–102 (FSDDMLFLRQLILDGQWDEVLQFIQPLECMEKFDKKRFRYIILKQKFLEALCVNNAMS) form the CTLH domain. T285 carries the post-translational modification Phosphothreonine. Phosphoserine occurs at positions 289, 292, 297, and 312. The disordered stretch occupies residues 393–421 (GQSSVSEKEPANGAQNPGPAKQEKNELRD). At S422 the chain carries Phosphoserine. The interval 500 to 590 (LNQQCNGSKG…SLSRSKGEED (91 aa)) is disordered. Residues 517–551 (VTSFTTPPQDSSQRLTHDASNIHTSTPRNPGSTNH) show a composition bias toward polar residues. T542 carries the phosphothreonine modification. WD repeat units follow at residues 604–643 (EDTQ…DPSA), 659–698 (HHKG…CNAT), 706–748 (MHDG…GQGL), 753–791 (GHTG…CVRV), 798–837 (GTGS…MVQS), 840–879 (PHSS…TKQL), and 886–918 (EHKD…WTYN).

Interacts with MAP1S (via WD repeats).

The protein resides in the cytoplasm. It is found in the cytoskeleton. This is WD repeat-containing protein 47 (WDR47) from Homo sapiens (Human).